Here is a 580-residue protein sequence, read N- to C-terminus: Arginine--tRNA ligase (580 aa).

Positions 127-137 match the 'HIGH' region motif; it reads PNLAKEMHVGH.

The protein belongs to the class-I aminoacyl-tRNA synthetase family. As to quaternary structure, monomer.

The protein resides in the cytoplasm. It catalyses the reaction tRNA(Arg) + L-arginine + ATP = L-arginyl-tRNA(Arg) + AMP + diphosphate. The polypeptide is Arginine--tRNA ligase (Idiomarina loihiensis (strain ATCC BAA-735 / DSM 15497 / L2-TR)).